The chain runs to 385 residues: Nonsense-mediated mRNA decay factor SMG9 (385 aa).

Positions 1–32 (MKKVEILKTSRPSSAGGAARPSTASPTHGAPK) are disordered.

The protein belongs to the SMG9 family.

Involved in nonsense-mediated decay (NMD) of mRNAs containing premature stop codons. Probable component of kinase complex containing smg-1 and recruited to stalled ribosomes. The polypeptide is Nonsense-mediated mRNA decay factor SMG9 (smg-9) (Caenorhabditis elegans).